The chain runs to 275 residues: 2-C-methyl-D-erythritol 4-phosphate cytidylyltransferase (275 aa).

It belongs to the IspD/TarI cytidylyltransferase family. IspD subfamily.

It catalyses the reaction 2-C-methyl-D-erythritol 4-phosphate + CTP + H(+) = 4-CDP-2-C-methyl-D-erythritol + diphosphate. It functions in the pathway isoprenoid biosynthesis; isopentenyl diphosphate biosynthesis via DXP pathway; isopentenyl diphosphate from 1-deoxy-D-xylulose 5-phosphate: step 2/6. Catalyzes the formation of 4-diphosphocytidyl-2-C-methyl-D-erythritol from CTP and 2-C-methyl-D-erythritol 4-phosphate (MEP). The polypeptide is 2-C-methyl-D-erythritol 4-phosphate cytidylyltransferase (Corynebacterium jeikeium (strain K411)).